Reading from the N-terminus, the 139-residue chain is Small ribosomal subunit protein uS12 (139 aa).

A disordered region spans residues 1-21 (MSTVSQLIKKRRSSKTSKTKA). The segment covering 8–18 (IKKRRSSKTSK) has biased composition (basic residues). 3-methylthioaspartic acid is present on Asp-102.

Belongs to the universal ribosomal protein uS12 family. Part of the 30S ribosomal subunit. Contacts proteins S8 and S17. May interact with IF1 in the 30S initiation complex.

In terms of biological role, with S4 and S5 plays an important role in translational accuracy. Interacts with and stabilizes bases of the 16S rRNA that are involved in tRNA selection in the A site and with the mRNA backbone. Located at the interface of the 30S and 50S subunits, it traverses the body of the 30S subunit contacting proteins on the other side and probably holding the rRNA structure together. The combined cluster of proteins S8, S12 and S17 appears to hold together the shoulder and platform of the 30S subunit. The protein is Small ribosomal subunit protein uS12 of Aster yellows witches'-broom phytoplasma (strain AYWB).